A 122-amino-acid chain; its full sequence is Large ribosomal subunit protein uL14 (122 aa).

Belongs to the universal ribosomal protein uL14 family. In terms of assembly, part of the 50S ribosomal subunit. Forms a cluster with proteins L3 and L19. In the 70S ribosome, L14 and L19 interact and together make contacts with the 16S rRNA in bridges B5 and B8.

In terms of biological role, binds to 23S rRNA. Forms part of two intersubunit bridges in the 70S ribosome. The protein is Large ribosomal subunit protein uL14 of Rhodospirillum centenum (strain ATCC 51521 / SW).